Consider the following 101-residue polypeptide: uncharacterized protein (101 aa).

3 consecutive transmembrane segments (helical) span residues Lys20 to Leu40, Gly59 to Ala79, and Ser81 to Phe101.

Its subcellular location is the endoplasmic reticulum. It localises to the membrane. This is an uncharacterized protein from Saccharomyces cerevisiae (strain ATCC 204508 / S288c) (Baker's yeast).